The following is a 258-amino-acid chain: MPLVIPAIDIRDGRCVRLHQGDYDNETVYFEDPVKMAKLWRVQNAQTLHVVDLDAARGEGEHNRDVIGKMCDALDIPIQLGGGIRSMDQIEAALDRGVYRVILGTAAVRNPDFVERAVEQFSARRVVVSIDARDGEVRVQGWTEGSGLDAVAFAKDMEQRGVRRLVYTDISRDGTMDGPNIQAYRTLGRQLAHAKVTASGGVGEHDDLLDIQTLQPYGVDSVIVGTALYENRFPCQQFWAWQDKDAVDLDTFSTASLR.

Catalysis depends on aspartate 9, which acts as the Proton acceptor. Residue aspartate 131 is the Proton donor of the active site.

Belongs to the HisA/HisF family.

Its subcellular location is the cytoplasm. The enzyme catalyses 1-(5-phospho-beta-D-ribosyl)-5-[(5-phospho-beta-D-ribosylamino)methylideneamino]imidazole-4-carboxamide = 5-[(5-phospho-1-deoxy-D-ribulos-1-ylimino)methylamino]-1-(5-phospho-beta-D-ribosyl)imidazole-4-carboxamide. It functions in the pathway amino-acid biosynthesis; L-histidine biosynthesis; L-histidine from 5-phospho-alpha-D-ribose 1-diphosphate: step 4/9. The polypeptide is 1-(5-phosphoribosyl)-5-[(5-phosphoribosylamino)methylideneamino] imidazole-4-carboxamide isomerase (Salinibacter ruber (strain DSM 13855 / M31)).